The sequence spans 339 residues: Nucleoid-associated protein Asuc_0779 (339 aa).

It belongs to the YejK family.

The protein localises to the cytoplasm. The protein resides in the nucleoid. The sequence is that of Nucleoid-associated protein Asuc_0779 from Actinobacillus succinogenes (strain ATCC 55618 / DSM 22257 / CCUG 43843 / 130Z).